The sequence spans 62 residues: Large ribosomal subunit protein bL33 (62 aa).

The protein belongs to the bacterial ribosomal protein bL33 family.

This Trichodesmium erythraeum (strain IMS101) protein is Large ribosomal subunit protein bL33.